Consider the following 168-residue polypeptide: NADH dehydrogenase [ubiquinone] 1 alpha subcomplex assembly factor 2 (168 aa).

Residues 112 to 168 (GKETSEELLPSPTATQVKGHASAPYFGREEPSVAPTSTGKTFQPGSWTPEDGKRQSQ) are disordered. Residue Ser133 is modified to Phosphoserine. Positions 145–157 (APTSTGKTFQPGS) are enriched in polar residues.

This sequence belongs to the complex I NDUFA12 subunit family. As to quaternary structure, interacts with ARMC9.

It is found in the mitochondrion. Acts as a molecular chaperone for mitochondrial complex I assembly. Complex I functions in the transfer of electrons from NADH to the respiratory chain. The immediate electron acceptor for the enzyme is believed to be ubiquinone. Is involved in the initial steps of cilia formation, including removal of CP110 from the mother centrioles, docking of membrane vesicles to the mother centrioles, and establishment of the transition zone. In Mus musculus (Mouse), this protein is NADH dehydrogenase [ubiquinone] 1 alpha subcomplex assembly factor 2 (Ndufaf2).